A 321-amino-acid chain; its full sequence is Carbonic anhydrase, chloroplastic (321 aa).

A chloroplast-targeting transit peptide spans 1-100 (MSTASINSCL…AAARVDQITA (100 aa)).

Belongs to the beta-class carbonic anhydrase family. Homohexamer.

The protein localises to the plastid. The protein resides in the chloroplast stroma. It catalyses the reaction hydrogencarbonate + H(+) = CO2 + H2O. Functionally, reversible hydration of carbon dioxide. The polypeptide is Carbonic anhydrase, chloroplastic (Nicotiana tabacum (Common tobacco)).